A 210-amino-acid chain; its full sequence is T-cell surface glycoprotein CD8 beta-2 chain (210 aa).

The N-terminal stretch at 1–18 is a signal peptide; sequence MRPRLWLLLAAQLTVLHG. Positions 19–132 constitute an Ig-like V-type domain; it reads NSVLQQTPAY…ELTFGKGTQL (114 aa). Over 19–170 the chain is Extracellular; it reads NSVLQQTPAY…ETQKGPLCSP (152 aa). A disulfide bond links cysteine 41 and cysteine 116. An N-linked (GlcNAc...) asparagine glycan is attached at asparagine 102. The helical transmembrane segment at 171–191 threads the bilayer; the sequence is VTLGLLVAGVLVLLVSLGVAM. The Cytoplasmic segment spans residues 192–210; it reads HLCCRRRRARLRFMKQFYK.

In general heterodimer of an alpha and a beta chain linked by two disulfide bonds.

The protein localises to the cell membrane. Identifies cytotoxic/suppressor T-cells that interact with MHC class I bearing targets. CD8 is thought to play a role in the process of T-cell mediated killing. The sequence is that of T-cell surface glycoprotein CD8 beta-2 chain from Homo sapiens (Human).